We begin with the raw amino-acid sequence, 359 residues long: MSGKRVVVGLSGGVDSSVTAWLLKQQGYEVIGLFMKNWEDDDDSEYCSTRQDWLDVASVADVIGVDVEAVNFAAEYKDRVFADFLREYSAGRTPNPDVLCNAEIKFKAFLDHAMSLGANTIATGHYARVRQAANGKFELLKAFDHTKDQSYFLHRLNQAQLSRTLFPLGEIPKTRVREIAAEIGLPNAKKKDSTGICFIGERPFRDFLNRYLPTQPGPMKTPEGKVVGEHIGLAFYTLGQRKGIGLGGSRDGSGDAWYVARKDMASNTLYVVQGHDHPWLLTSELNAADLSWVAGEPPAAGATMAAKTRYRQSDAPCRVVAAEGDALKLSFAEPQWAVTPGQSAVLYDGDVCLGGGIIQ.

ATP contacts are provided by residues 9-16 (GLSGGVDS) and Met35. The interaction with target base in tRNA stretch occupies residues 95 to 97 (NPD). The active-site Nucleophile is the Cys100. A disulfide bridge connects residues Cys100 and Cys197. Gly124 is a binding site for ATP. The interval 147-149 (KDQ) is interaction with tRNA. Cys197 acts as the Cysteine persulfide intermediate in catalysis. Residues 309–310 (RY) are interaction with tRNA.

It belongs to the MnmA/TRMU family.

It localises to the cytoplasm. The catalysed reaction is S-sulfanyl-L-cysteinyl-[protein] + uridine(34) in tRNA + AH2 + ATP = 2-thiouridine(34) in tRNA + L-cysteinyl-[protein] + A + AMP + diphosphate + H(+). Catalyzes the 2-thiolation of uridine at the wobble position (U34) of tRNA, leading to the formation of s(2)U34. This is tRNA-specific 2-thiouridylase MnmA from Cupriavidus metallidurans (strain ATCC 43123 / DSM 2839 / NBRC 102507 / CH34) (Ralstonia metallidurans).